A 731-amino-acid chain; its full sequence is MSVAHVALPVPLPRTFDYLLPEGMAVKAGCRVRVPFGKQERIGIVAAVSERSELPLDELKPVAEALDDEPVFSTTVWRLLMWAAEYYHHPIGDVLFHALPVMLRQGKPASATPLWYWFATEQGQVVDLNGLKRSRKQQQALAALRQGKIWRHQVGELEFNEAALQALRGKGLAELACEAPALTDWRSAYSVAGERLRLNTEQATAVGAIHSAADRFSAWLLAGITGSGKTEVYLSVLENVLAQGRQALVMVPEIGLTPQTIARFRQRFNAPVEVLHSGLNDSERLSAWLKAKNGEAAIVIGTRSSLFTPFKDLGVIVIDEEHDSSYKQQEGWRYHARDLAVWRAHSEQIPIILGSATPALETLHNVRQGKYRQLTLSKRAGNARPAQQHVLDLKGQPLQAGLSPALISRMRQHLQADNQVILFLNRRGFAPALLCHDCGWIAECPRCDSYYTLHQAQHHLRCHHCDSQRPIPRQCPSCGSTHLVPVGIGTEQLEQALAPLFPEVPISRIDRDTTSRKGALEEHLAAVHRGGARILIGTQMLAKGHHFPDVTLVSLLDVDGALFSADFRSAERFAQLYTQVSGRAGRAGKQGEVILQTHHPEHPLLQTLLYKGYDAFAEQALAERQTMQLPPWTSHVLIRAEDHNNQQAPLFLQQLRNLLQASPLADEKLWVLGPVPALAPKRGGRWRWQILLQHPSRVRLQHIVSGTLALINTLPEARKVKWVLDVDPIEG.

The 3'BD stretch occupies residues 1–98 (MSVAHVALPV…HPIGDVLFHA (98 aa)). Residues 115–177 (WYWFATEQGQ…RGKGLAELAC (63 aa)) are WH. Residues 200–375 (TEQATAVGAI…VRQGKYRQLT (176 aa)) form a helicase lobe 1 region. The 167-residue stretch at 210 to 376 (HSAADRFSAW…RQGKYRQLTL (167 aa)) folds into the Helicase ATP-binding domain. 223–230 (GITGSGKT) serves as a coordination point for ATP. Positions 226, 228, 229, 230, 231, and 263 each coordinate ADP. The DEAH box motif lies at 319-322 (DEEH). The Aromatic-rich loop (ARL) motif lies at 326–340 (YKQQEGWRYHARDLA). A helicase lobe 2, N-terminus region spans residues 387–430 (QQHVLDLKGQPLQAGLSPALISRMRQHLQADNQVILFLNRRGFA). The tract at residues 431–485 (PALLCHDCGWIAECPRCDSYYTLHQAQHHLRCHHCDSQRPIPRQCPSCGSTHLVP) is CRR. Cys435, Cys438, Cys444, Cys447, Cys462, Cys465, Cys475, and Cys478 together coordinate Zn(2+). The 168-residue stretch at 470–637 (PIPRQCPSCG…QLPPWTSHVL (168 aa)) folds into the Helicase C-terminal domain. A helicase lobe 2, C-terminus region spans residues 486-626 (VGIGTEQLEQ…AEQALAERQT (141 aa)). ADP is bound at residue Lys543. A CTD region spans residues 633-731 (TSHVLIRAED…WVLDVDPIEG (99 aa)).

Belongs to the helicase family. PriA subfamily. As to quaternary structure, binds SSB. Component of the replication restart primosome. Requires Zn(2+) as cofactor.

The catalysed reaction is Couples ATP hydrolysis with the unwinding of duplex DNA by translocating in the 3'-5' direction.. The enzyme catalyses ATP + H2O = ADP + phosphate + H(+). ATPase activity is stimulated by single-stranded binding protein (SSB). Its function is as follows. Initiates the restart of stalled replication forks, which reloads the replicative helicase on sites other than the origin of replication. Recognizes and binds to abandoned replication forks and remodels them to uncover a helicase loading site. Promotes assembly of the primosome at these replication forks. Recognizes abandoned replication forks and remodels SSB on ssDNA to uncover a loading site for DnaB. Binds replication fork DNA, has DNA-dependent ATPase activity in the presence of replication fork DNA, restores normal cell growth and SOS induction to E.coli mutant pirA304. The chain is Replication restart protein PriA from Klebsiella pneumoniae subsp. pneumoniae (strain ATCC 700721 / MGH 78578).